Reading from the N-terminus, the 322-residue chain is Solute carrier family 35 member B1 (322 aa).

A run of 8 helical transmembrane segments spans residues 12–32, 51–71, 85–105, 136–156, 168–188, 210–230, 243–263, and 285–305; these read LRLP…GILQ, FALT…KILI, WLYA…NSAL, YPMA…LFMY, TIGY…LTGV, LWST…WEFL, ILLF…TVVY, and VILF…LVFL. The Di-lysine motif signature appears at 318–322; that stretch reads KKTSH.

This sequence belongs to the nucleotide-sugar transporter family. SLC35B subfamily.

The protein resides in the endoplasmic reticulum membrane. It catalyses the reaction ADP(in) + ATP(out) = ADP(out) + ATP(in). The catalysed reaction is UDP(out) + ATP(in) = UDP(in) + ATP(out). It carries out the reaction UTP(out) + ATP(in) = UTP(in) + ATP(out). The enzyme catalyses dATP(out) + ATP(in) = dATP(in) + ATP(out). Functionally, ATP:ADP antiporter that catalyzes the exchange of ATP and ADP across the endoplasmic reticulum (ER) membrane. Imports ATP from the cytosol to the ER lumen and exports ADP in the opposite direction. Regulates ER energy metabolism and protein biogenesis. Appears to be part of a calcium-dependent ER to cytosol low energy response axis, where calcium efflux from ER to the cytosol triggers ATP import into the ER lumen to maintain sufficient ATP supply. Provides ATP to ER chaperone HSPA5 that drives protein folding and trafficking in the ER. Can transport dATP, UTP or UDP in exchange for ATP, but the physiological relevance of this process remains to be established. The protein is Solute carrier family 35 member B1 (SLC35B1) of Bos taurus (Bovine).